The primary structure comprises 119 residues: Movement protein TGB2 (119 aa).

The Cytoplasmic portion of the chain corresponds to 1-13 (MVRNNEIGARPNK). Residues 14-34 (YWPVVAAVVAICLFGFLTVTN) form a helical membrane-spanning segment. The Lumenal portion of the chain corresponds to 35-79 (QKHATQSGDNIHKFANGGQYRDGSKSIKYNCNNPRAYNGSSSNIT). The helical transmembrane segment at 80–100 (FSQLFLPVLLIGAALYAYLWF) threads the bilayer. Residues 101–119 (TRPDCSVTCRGDCCRSYGG) are Cytoplasmic-facing.

This sequence belongs to the virgaviridae/benyvirus TGB2 movement protein family. Interacts with movement protein TGB3. TGB1-TGB3-TGB2 complex formation is enhanced by ATP hydrolysis.

The protein localises to the host cell junction. It localises to the host plasmodesma. Its subcellular location is the host endoplasmic reticulum membrane. It is found in the host cytoplasm. The protein resides in the host cytoskeleton. The protein localises to the host chloroplast envelope. Functionally, participates in the transport of viral genome to neighboring plant cells directly through plasmodesmata, without any budding. TGBp2 and TGBp3 are necessary for intracellular delivery of TGBp1-containing vRNPs to plasmodesmata. Can gate plasmodesmata and increase their size exclusion limit. To a lesser extent than TGB3, induces host actin cytoskeleton network thickening, which probably plays a major role in virus cell-to-cell movement. Binds ssRNA in a sequence non-specific manner. The sequence is that of Movement protein TGB2 from Potato mop-top virus (isolate Potato/Sweden/Sw) (PMTV).